Reading from the N-terminus, the 195-residue chain is Small ribosomal subunit protein uS4c (195 aa).

Residues 82 to 143 (MRLDNILFRL…KQRSKALIQN (62 aa)) form the S4 RNA-binding domain.

The protein belongs to the universal ribosomal protein uS4 family. As to quaternary structure, part of the 30S ribosomal subunit. Contacts protein S5. The interaction surface between S4 and S5 is involved in control of translational fidelity.

The protein localises to the plastid. It localises to the chloroplast. Functionally, one of the primary rRNA binding proteins, it binds directly to 16S rRNA where it nucleates assembly of the body of the 30S subunit. With S5 and S12 plays an important role in translational accuracy. The polypeptide is Small ribosomal subunit protein uS4c (rps4) (Gladiolus murielae (Abyssinian gladiolus)).